Reading from the N-terminus, the 705-residue chain is Effector protein AvrPphDPsv (705 aa).

Over residues 1–15 the composition is skewed to polar residues; sequence MNPLQSIQHNITTPP. Disordered stretches follow at residues 1-40 and 175-205; these read MNPL…ISPS and RLET…RRES.

Its subcellular location is the secreted. Its function is as follows. Effector protein involved in non-host recognition. The chain is Effector protein AvrPphDPsv (avrPphDPsv) from Pseudomonas savastanoi (Pseudomonas syringae pv. savastanoi).